A 429-amino-acid chain; its full sequence is MNHSRSHALFAQAQTLLPGGVNSPVRAFKSVGGEPFFVARADGPYLFDVDDNRYIDYVGSWGPMIAGHNHPAVREAVERAIGNGLSFGAPCAAEVTMAQTITRLVPSCEMVRMVNSGTEATLSAVRLARGATGRNRIIKFEGCYHGHGDSFLVKAGSGMLTLGVPTSPGVPAGLSELTATLSFNDFEGATALFDEIGAEVAAVIIEPVVGNANCIPPQAGYLQHLRTLCTRHGALLIFDEVMTGFRVALGGAQAHYGVTPDLTTFGKIIGGGMPVGAYGGRRDLMEQVAPAGPIYQAGTLSGNPVAMAAGLAMLELVQEPGFHTRLSEATSMLCEGLEDAARAAGIAVTTNQVGGMFGLFFTDDIVESYAQATACDITSFNRFFHAMLQRGVYLAPSAYEAGFMSSAHDQAVIEATLAAAREAFADVAR.

Lys267 is modified (N6-(pyridoxal phosphate)lysine).

This sequence belongs to the class-III pyridoxal-phosphate-dependent aminotransferase family. HemL subfamily. In terms of assembly, homodimer. It depends on pyridoxal 5'-phosphate as a cofactor.

The protein localises to the cytoplasm. It catalyses the reaction (S)-4-amino-5-oxopentanoate = 5-aminolevulinate. The protein operates within porphyrin-containing compound metabolism; protoporphyrin-IX biosynthesis; 5-aminolevulinate from L-glutamyl-tRNA(Glu): step 2/2. This chain is Glutamate-1-semialdehyde 2,1-aminomutase, found in Xanthomonas euvesicatoria pv. vesicatoria (strain 85-10) (Xanthomonas campestris pv. vesicatoria).